The primary structure comprises 636 residues: Nitrous-oxide reductase (636 aa).

Positions 1–49 form a signal peptide, tat-type signal; it reads MSDDTKSPHEETHGLNRRGFLGASALTGAAALVGASALGSAVVGREARA. Residues H127, H128, and H176 each coordinate Cu cation. Ca(2+) contacts are provided by Y254, E257, M265, and D271. Residues 302–312 show a composition bias toward basic and acidic residues; the sequence is DGRRKDGKDSP. Positions 302–322 are disordered; that stretch reads DGRRKDGKDSPVTRYIPVPKN. Residue N322 coordinates Ca(2+). Cu cation-binding residues include H324, H380, and H431. Positions 452 and 467 each coordinate Ca(2+). Residues H492, H581, C616, W618, C620, H624, and M627 each coordinate Cu cation. The segment at 540–636 is COX2-like; it reads NKVRVYMVSM…MCGRMLVEKA (97 aa).

Belongs to the NosZ family. The protein in the C-terminal section; belongs to the cytochrome c oxidase subunit 2 family. Homodimer. Ca(2+) is required as a cofactor. It depends on Cu cation as a cofactor. In terms of processing, predicted to be exported by the Tat system. The position of the signal peptide cleavage has not been experimentally proven.

The protein resides in the periplasm. It catalyses the reaction N2 + 2 Fe(III)-[cytochrome c] + H2O = nitrous oxide + 2 Fe(II)-[cytochrome c] + 2 H(+). Its pathway is nitrogen metabolism; nitrate reduction (denitrification); dinitrogen from nitrate: step 4/4. Nitrous-oxide reductase is part of a bacterial respiratory system which is activated under anaerobic conditions in the presence of nitrate or nitrous oxide. The chain is Nitrous-oxide reductase (nosZ) from Pseudomonas aeruginosa (strain ATCC 15692 / DSM 22644 / CIP 104116 / JCM 14847 / LMG 12228 / 1C / PRS 101 / PAO1).